Reading from the N-terminus, the 459-residue chain is Nuclear hormone receptor family member nhr-11 (459 aa).

The nuclear receptor DNA-binding region spans 2–81 (GPLCAVCESP…AGMRSELVRS (80 aa)). NR C4-type zinc fingers lie at residues 5–26 (CAVC…CKAC) and 42–69 (CAAD…LRKC). 2 disordered regions span residues 90 to 119 (RRKD…EEMD) and 134 to 162 (DLPL…SSFD). A compositionally biased stretch (low complexity) spans 97–115 (NSDAAPNSNSPSTRQSSSP). The NR LBD domain maps to 188-458 (ENNSILQYYH…SMLHEMLNFQ (271 aa)).

Belongs to the nuclear hormone receptor family.

It localises to the nucleus. Functionally, orphan nuclear receptor. This Caenorhabditis elegans protein is Nuclear hormone receptor family member nhr-11 (nhr-11).